A 211-amino-acid chain; its full sequence is Protein-methionine-sulfoxide reductase heme-binding subunit MsrQ (211 aa).

A run of 4 helical transmembrane segments spans residues 17-37, 82-102, 116-136, and 153-173; these read LAGLLPFLWLVWAINHGGLGA, LWCFAWATLHLTSYALLELGV, PYLTLGIISWVILLALAFTST, and FVYLVAILAPIHYLWSVKIIS.

This sequence belongs to the MsrQ family. Heterodimer of a catalytic subunit (MsrP) and a heme-binding subunit (MsrQ). Requires FMN as cofactor. The cofactor is heme b.

The protein localises to the cell inner membrane. Its function is as follows. Part of the MsrPQ system that repairs oxidized periplasmic proteins containing methionine sulfoxide residues (Met-O), using respiratory chain electrons. Thus protects these proteins from oxidative-stress damage caused by reactive species of oxygen and chlorine generated by the host defense mechanisms. MsrPQ is essential for the maintenance of envelope integrity under bleach stress, rescuing a wide series of structurally unrelated periplasmic proteins from methionine oxidation, including the primary periplasmic chaperone SurA and the lipoprotein Pal. MsrQ provides electrons for reduction to the reductase catalytic subunit MsrP, using the quinone pool of the respiratory chain. In Shigella sonnei (strain Ss046), this protein is Protein-methionine-sulfoxide reductase heme-binding subunit MsrQ.